Consider the following 108-residue polypeptide: Phosphoribosyl-ATP pyrophosphatase (108 aa).

This sequence belongs to the PRA-PH family.

The protein localises to the cytoplasm. The enzyme catalyses 1-(5-phospho-beta-D-ribosyl)-ATP + H2O = 1-(5-phospho-beta-D-ribosyl)-5'-AMP + diphosphate + H(+). Its pathway is amino-acid biosynthesis; L-histidine biosynthesis; L-histidine from 5-phospho-alpha-D-ribose 1-diphosphate: step 2/9. The chain is Phosphoribosyl-ATP pyrophosphatase from Dechloromonas aromatica (strain RCB).